The primary structure comprises 386 residues: Adiponectin receptor protein 2 (386 aa).

Residues 1–72 (MNEPAKHRLG…ECHDDNSQED (72 aa)) are disordered. Over 1 to 147 (MNEPAKHRLG…SIFRIHTETG (147 aa)) the chain is Cytoplasmic. Basic and acidic residues predominate over residues 15-31 (PEPDIRLRKGHQLDDTR). A compositionally biased stretch (acidic residues) spans 58–72 (SPEEPECHDDNSQED). A helical membrane pass occupies residues 148–168 (NIWTHLLGCVFFLCLGIFYMF). Topologically, residues 169-181 (RPNISFVAPLQEK) are extracellular. The helical transmembrane segment at 182–202 (VVFGLFFLGAILCLSFSWLFH) threads the bilayer. H202 provides a ligand contact to Zn(2+). Residues 203-213 (TVYCHSEGVSR) are Cytoplasmic-facing. A helical transmembrane segment spans residues 214–234 (LFSKLDYSGIALLIMGSFVPW). Residues 235–245 (LYYSFYCNPQP) lie on the Extracellular side of the membrane. A helical membrane pass occupies residues 246–266 (CFIYLIVICVLGIAAIIVSQW). Over 267–273 (DMFATPQ) the chain is Cytoplasmic. The helical transmembrane segment at 274–294 (YRGVRAGVFVGLGLSGIIPTL) threads the bilayer. Residues 295 to 309 (HYVISEGFLKAATIG) are Extracellular-facing. Residues 310–330 (QIGWLMLMASLYITGAALYAA) form a helical membrane-spanning segment. At 331–348 (RIPERFFPGKCDIWFHSH) the chain is on the cytoplasmic side. Zn(2+)-binding residues include H348 and H352. A helical membrane pass occupies residues 349-369 (QLFHIFVVAGAFVHFHGVSNL). Topologically, residues 370–386 (QEFRFMIGGGCTEEDAL) are extracellular.

This sequence belongs to the ADIPOR family. May form homooligomers and heterooligomers with ADIPOR1. Interacts with APPL2 (via BAR domain); ADIPOQ dissociates this interaction. In terms of tissue distribution, detected in liver and quadriceps muscle (at protein level). Highly expressed in liver. Highly expressed in white adipose tissue, and at intermediate levels in brown adipose tissue. Expressed at intermediate level in heart, kidney, lung and skeletal muscle. Weakly expressed in brain, spleen and testis.

It is found in the cell membrane. Functionally, receptor for ADIPOQ, an essential hormone secreted by adipocytes that regulates glucose and lipid metabolism. Required for normal body fat and glucose homeostasis. ADIPOQ-binding activates a signaling cascade that leads to increased PPARA activity, and ultimately to increased fatty acid oxidation and glucose uptake. Has intermediate affinity for globular and full-length adiponectin. Required for normal revascularization after chronic ischemia caused by severing of blood vessels. The chain is Adiponectin receptor protein 2 from Mus musculus (Mouse).